The sequence spans 345 residues: Methylthioribose-1-phosphate isomerase (345 aa).

Residues 47-49 (RGA), arginine 90, and glutamine 197 contribute to the substrate site. The Proton donor role is filled by aspartate 238. 248–249 (NK) contacts substrate.

Belongs to the eIF-2B alpha/beta/delta subunits family. MtnA subfamily.

The enzyme catalyses 5-(methylsulfanyl)-alpha-D-ribose 1-phosphate = 5-(methylsulfanyl)-D-ribulose 1-phosphate. It participates in amino-acid biosynthesis; L-methionine biosynthesis via salvage pathway; L-methionine from S-methyl-5-thio-alpha-D-ribose 1-phosphate: step 1/6. Catalyzes the interconversion of methylthioribose-1-phosphate (MTR-1-P) into methylthioribulose-1-phosphate (MTRu-1-P). The chain is Methylthioribose-1-phosphate isomerase from Caldanaerobacter subterraneus subsp. tengcongensis (strain DSM 15242 / JCM 11007 / NBRC 100824 / MB4) (Thermoanaerobacter tengcongensis).